The following is a 490-amino-acid chain: (21S)-21-acetyl-1-hydroxy-apo-melianone synthase CYP88A164 (490 aa).

Residues aspartate 4–leucine 24 traverse the membrane as a helical segment. Position 438 (cysteine 438) interacts with heme.

It belongs to the cytochrome P450 family. It depends on heme as a cofactor. In terms of tissue distribution, mainly expressed in petioles and, to a lower extent, in roots.

Its subcellular location is the membrane. It carries out the reaction (21S)-21-acetoxyl-apo-melianone + reduced [NADPH--hemoprotein reductase] + O2 = (21S)-21-acetyl-1-hydroxy-apo-melianone + oxidized [NADPH--hemoprotein reductase] + H2O + H(+). The protein operates within secondary metabolite biosynthesis; terpenoid biosynthesis. In terms of biological role, monooxygenase involved in the biosynthesis of limonoids triterpene natural products such as azadirachtin, an antifeedant widely used as bioinsecticide, and possessing many medicinal applications including anti-tumoral, anti-malarial, anti-rheumatic, antibacterial, anti-inflammatory, anti-pyretic and diuretic effects. Catalyzes the conversion of (21S)-21-acetoxyl-apo-melianone to (21S)-21-acetyl-1-hydroxy-apo-melianone. In Melia azedarach (Chinaberry tree), this protein is (21S)-21-acetyl-1-hydroxy-apo-melianone synthase CYP88A164.